Consider the following 943-residue polypeptide: Isoleucine--tRNA ligase (943 aa).

A 'HIGH' region motif is present at residues 59 to 69; sequence PYANGQIHLGH. Residue glutamate 577 coordinates L-isoleucyl-5'-AMP. The short motif at 618 to 622 is the 'KMSKS' region element; that stretch reads KMSKS. Lysine 621 contributes to the ATP binding site. Residues cysteine 906, cysteine 909, cysteine 926, and cysteine 929 each coordinate Zn(2+).

This sequence belongs to the class-I aminoacyl-tRNA synthetase family. IleS type 1 subfamily. In terms of assembly, monomer. The cofactor is Zn(2+).

The protein resides in the cytoplasm. The catalysed reaction is tRNA(Ile) + L-isoleucine + ATP = L-isoleucyl-tRNA(Ile) + AMP + diphosphate. In terms of biological role, catalyzes the attachment of isoleucine to tRNA(Ile). As IleRS can inadvertently accommodate and process structurally similar amino acids such as valine, to avoid such errors it has two additional distinct tRNA(Ile)-dependent editing activities. One activity is designated as 'pretransfer' editing and involves the hydrolysis of activated Val-AMP. The other activity is designated 'posttransfer' editing and involves deacylation of mischarged Val-tRNA(Ile). In Xylella fastidiosa (strain 9a5c), this protein is Isoleucine--tRNA ligase.